The chain runs to 221 residues: Woronin body major protein (221 aa).

The Microbody targeting signal motif lies at 219–221 (SRL).

It belongs to the eIF-5A family. Hex1 subfamily. In terms of assembly, forms oligomers. Self-assembles into hexagonal rods.

The protein localises to the cell septum. In terms of biological role, major component of Woronin bodies, fungal-specific organelles that occlude septal pores in order to separate intact from damaged compartments. Hex1 binds directly or indirectly to the Woronin body tether that in turn is anchored at the rim of the septal pore. The sequence is that of Woronin body major protein from Emericella nidulans (strain FGSC A4 / ATCC 38163 / CBS 112.46 / NRRL 194 / M139) (Aspergillus nidulans).